Consider the following 410-residue polypeptide: Cathepsin D (410 aa).

The first 20 residues, 1–20 (MKTPGVLLLILGLLASSSFA), serve as a signal peptide directing secretion. A propeptide spans 21-64 (IIRIPLRKFTSIRRTMTEVGGSVEDLILKGPITKYSMQSSPKTT) (activation peptide). Positions 79–405 (YYGDIGIGTP…DRDNNRVGFA (327 aa)) constitute a Peptidase A1 domain. Intrachain disulfides connect Cys-91–Cys-160 and Cys-110–Cys-117. Residue Asp-97 is part of the active site. Residue Asn-134 is glycosylated (N-linked (GlcNAc...) asparagine). N-linked (GlcNAc...) (high mannose) asparagine glycosylation occurs at Asn-261. Cys-284 and Cys-288 are disulfide-bonded. The active site involves Asp-293. A disulfide bridge links Cys-327 with Cys-364.

It belongs to the peptidase A1 family. As to quaternary structure, consists of a light chain and a heavy chain. Interacts with ADAM30; this leads to activation of CTSD. Interacts with GRN; stabilizes CTSD; increases its proteolytic activity. In terms of processing, N- and O-glycosylated. Undergoes proteolytic cleavage and activation by ADAM30.

The protein localises to the lysosome. The protein resides in the melanosome. It localises to the secreted. It is found in the extracellular space. The enzyme catalyses Specificity similar to, but narrower than, that of pepsin A. Does not cleave the 4-Gln-|-His-5 bond in B chain of insulin.. Its function is as follows. Acid protease active in intracellular protein breakdown. Plays a role in APP processing following cleavage and activation by ADAM30 which leads to APP degradation. The chain is Cathepsin D (Ctsd) from Mus musculus (Mouse).